Reading from the N-terminus, the 259-residue chain is PKHD-type hydroxylase PsycPRwf_1523 (259 aa).

In terms of domain architecture, Fe2OG dioxygenase spans 80 to 180 (VIMPPLFSAY…RLAMVTWVQS (101 aa)). Fe cation is bound by residues His-98, Asp-100, and His-161. A 2-oxoglutarate-binding site is contributed by Arg-171.

The cofactor is Fe(2+). It depends on L-ascorbate as a cofactor.

The sequence is that of PKHD-type hydroxylase PsycPRwf_1523 from Psychrobacter sp. (strain PRwf-1).